The sequence spans 107 residues: Small ribosomal subunit protein bS16m (107 aa).

This sequence belongs to the bacterial ribosomal protein bS16 family. Component of the mitochondrial small ribosomal subunit (mt-SSU). Mature N.crassa 74S mitochondrial ribosomes consist of a small (37S) and a large (54S) subunit. The 37S small subunit contains a 16S ribosomal RNA (16S mt-rRNA) and 32 different proteins. The 54S large subunit contains a 23S rRNA (23S mt-rRNA) and 42 different proteins.

The protein localises to the mitochondrion. Its function is as follows. Component of the mitochondrial ribosome (mitoribosome), a dedicated translation machinery responsible for the synthesis of mitochondrial genome-encoded proteins, including at least some of the essential transmembrane subunits of the mitochondrial respiratory chain. The mitoribosomes are attached to the mitochondrial inner membrane and translation products are cotranslationally integrated into the membrane. The chain is Small ribosomal subunit protein bS16m (cyt-21) from Neurospora crassa (strain ATCC 24698 / 74-OR23-1A / CBS 708.71 / DSM 1257 / FGSC 987).